A 199-amino-acid polypeptide reads, in one-letter code: Dephospho-CoA kinase (199 aa).

The region spanning 2–199 is the DPCK domain; the sequence is KIAVTGGYSS…FVADRIEKKK (198 aa). 10–15 lines the ATP pocket; sequence SSGKSS.

The protein belongs to the CoaE family.

The protein localises to the cytoplasm. It catalyses the reaction 3'-dephospho-CoA + ATP = ADP + CoA + H(+). The protein operates within cofactor biosynthesis; coenzyme A biosynthesis; CoA from (R)-pantothenate: step 5/5. In terms of biological role, catalyzes the phosphorylation of the 3'-hydroxyl group of dephosphocoenzyme A to form coenzyme A. The chain is Dephospho-CoA kinase from Desulfotalea psychrophila (strain LSv54 / DSM 12343).